The sequence spans 83 residues: MLVLTRRVGEKIVIGEDIVITVLKIEGNSVKIGIEAPKHVKILREELYEELKSENIKASEVSKDDLKGVLRNDKGYKGPSASS.

Belongs to the CsrA/RsmA family. As to quaternary structure, homodimer; the beta-strands of each monomer intercalate to form a hydrophobic core, while the alpha-helices form wings that extend away from the core.

It is found in the cytoplasm. In terms of biological role, a translational regulator that binds mRNA to regulate translation initiation and/or mRNA stability. Usually binds in the 5'-UTR at or near the Shine-Dalgarno sequence preventing ribosome-binding, thus repressing translation. Its main target seems to be the major flagellin gene, while its function is anatagonized by FliW. In Thermotoga maritima (strain ATCC 43589 / DSM 3109 / JCM 10099 / NBRC 100826 / MSB8), this protein is Translational regulator CsrA.